A 369-amino-acid polypeptide reads, in one-letter code: Endophilin-A (369 aa).

Residues 18 to 248 form the BAR domain; that stretch reads TEKMGGAEGT…LQEKRSEAES (231 aa). Residues 227-247 adopt a coiled-coil conformation; it reads QCADVLRGLQETLQEKRSEAE. Residues 275 to 294 are compositionally biased toward low complexity; that stretch reads GTPSHISSSASPLPSPMRSP. Positions 275–296 are disordered; it reads GTPSHISSSASPLPSPMRSPAK. The SH3 domain occupies 305-364; it reads QQQPCCQALYDFDPENPGELGFKENDIITLLNRVDDNWYEGAVNGRTGYFPQSYVQVQVP.

It belongs to the endophilin family.

Its subcellular location is the cytoplasm. It is found in the membrane. In terms of biological role, required presynaptically at the neuromuscular junction. Implicated in synaptic vesicle endocytosis. This Drosophila pseudoobscura pseudoobscura (Fruit fly) protein is Endophilin-A.